Reading from the N-terminus, the 265-residue chain is MDTVLDPFTGLDSFSSSYFDDDDFFTDHSSRDHLDTDDFLDEDVDFLTNQIQEYYKDSRISQDGDYCDVGNFSFSSSSSTFSYGCADSTSELSPHRDGGLLKRRRRMRSEVEMQQLRQAANVRERRRMQSINDAFEGLRSHIPTLPYEKRLSKVDTLRLAIGYINFLAELVQSDMPIRNPHSDALNQPKKVIICHRGTRSPSPNDPDYGLPPLAGHSLSWTDEKQLKDQNIIRTAKVWTPEDPRKLHLKSSINNIENEPPFNFIS.

Positions 115 to 167 (QLRQAANVRERRRMQSINDAFEGLRSHIPTLPYEKRLSKVDTLRLAIGYINFL) constitute a bHLH domain.

The protein resides in the nucleus. Its function is as follows. Transcription factor implicated in the cell fate determination in various organs. Binds to the E-box consensus sequence 5'-CANNTG-3'. Required for exocrine pancreatic development. Plays a central role in directing the differentiation of retinal progenitors towards horizontal and amacrine fates. In Danio rerio (Zebrafish), this protein is Pancreas transcription factor 1 subunit alpha (ptf1a).